The following is a 359-amino-acid chain: Sulfate/thiosulfate import ATP-binding protein CysA (359 aa).

Residues 3–237 (VRVAGVRKEF…PNSPFVYGFI (235 aa)) form the ABC transporter domain. 35–42 (GPSGSGKT) contacts ATP.

This sequence belongs to the ABC transporter superfamily. Sulfate/tungstate importer (TC 3.A.1.6) family. As to quaternary structure, the complex is composed of two ATP-binding proteins (CysA), two transmembrane proteins (CysT and CysW) and a solute-binding protein (CysP).

The protein localises to the cell inner membrane. It carries out the reaction sulfate(out) + ATP + H2O = sulfate(in) + ADP + phosphate + H(+). It catalyses the reaction thiosulfate(out) + ATP + H2O = thiosulfate(in) + ADP + phosphate + H(+). Its function is as follows. Part of the ABC transporter complex CysAWTP involved in sulfate/thiosulfate import. Responsible for energy coupling to the transport system. The polypeptide is Sulfate/thiosulfate import ATP-binding protein CysA (Brucella melitensis biotype 1 (strain ATCC 23456 / CCUG 17765 / NCTC 10094 / 16M)).